A 1048-amino-acid polypeptide reads, in one-letter code: 3-hydroxy-3-methylglutaryl-coenzyme A reductase (1048 aa).

Residues 1–32 lie on the Cytoplasmic side of the membrane; that stretch reads MDPVVRKPDPGGVQHRVTKALRAIVGHACRHP. The chain crosses the membrane as a helical span at residues 33–53; that stretch reads IHTLLVTALTAATTHLHVLEG. Residues 54 to 220 lie on the Lumenal side of the membrane; sequence TYQATHRGLA…FLHRVHHAET (167 aa). The chain crosses the membrane as a helical span at residues 221 to 241; sequence VDLVIIGLSYLAMNMTVVSLF. The region spanning 222–403 is the SSD domain; it reads DLVIIGLSYL…FTFYATILCV (182 aa). Residues 242-250 lie on the Cytoplasmic side of the membrane; it reads RVMRHLGSR. A helical membrane pass occupies residues 251 to 271; sequence FWLAASVLLSGAFAFVLGLGI. The Lumenal segment spans residues 272 to 276; it reads TTTCD. The helical transmembrane segment at 277-297 threads the bilayer; it reads VPVDMLLLFEGIPYLVLTVGF. At 298-348 the chain is on the cytoplasmic side; that stretch reads EKPIQLTRAVLCVSEELWGGGQRQVPNGASSDDSRQNQLIPNIIQLAVDRE. A helical transmembrane segment spans residues 349–369; it reads GWYIVRSYLLEIGALALGAVL. The Lumenal segment spans residues 370–377; the sequence is RPKDSLGH. A helical transmembrane segment spans residues 378-398; sequence FCFLAAWTLLIDAVLLFTFYA. The Cytoplasmic segment spans residues 399–439; it reads TILCVKLEITRIRSPGGLGQVNAKHPSGIFGHKVKSTNITW. Residues 440-460 traverse the membrane as a helical segment; sequence WKLLTVGGFVLCHFLQLSPFF. Over 461–542 the chain is Lumenal; it reads YRVMGEYMAN…LDGLESPLGR (82 aa). N-linked (GlcNAc...) asparagine glycosylation is found at Asn-470 and Asn-520. The helical transmembrane segment at 543-563 threads the bilayer; sequence LCLMGALVVSLVLNNHLIHAA. Topologically, residues 564-1048 are cytoplasmic; that stretch reads RWHAWPQARE…NRSAGATVKK (485 aa). Glu-729 (charge relay system) is an active-site residue. Position 735-741 (735-741) interacts with CoA; it reads SASRGCK. Residues 796-798 and 823-831 each bind NADP(+); these read SRF and DAMGMNMIS. Lys-863 serves as the catalytic Charge relay system. Residue 892–894 participates in CoA binding; the sequence is VLK. Asp-939 acts as the Charge relay system in catalysis. 1034-1035 lines the CoA pocket; that stretch reads AH. The active-site Proton donor is the His-1035. Position 1039–1040 (1039–1040) interacts with NADP(+); it reads NR.

It belongs to the HMG-CoA reductase family.

It localises to the endoplasmic reticulum membrane. The enzyme catalyses (R)-mevalonate + 2 NADP(+) + CoA = (3S)-3-hydroxy-3-methylglutaryl-CoA + 2 NADPH + 2 H(+). The protein operates within metabolic intermediate biosynthesis; (R)-mevalonate biosynthesis; (R)-mevalonate from acetyl-CoA: step 3/3. Functionally, HMG-CoA reductase; part of the first module of ergosterol biosynthesis pathway that includes the early steps of the pathway, conserved across all eukaryotes, and which results in the formation of mevalonate from acetyl-coenzyme A (acetyl-CoA). In this module, the cytosolic acetyl-CoA acetyltransferase catalyzes the formation of acetoacetyl-CoA. The hydroxymethylglutaryl-CoA synthase then condenses acetyl-CoA with acetoacetyl-CoA to form HMG-CoA. The rate-limiting step of the early module is the reduction to mevalonate by the 3-hydroxy-3-methylglutaryl-coenzyme A (HMG-CoA) reductase. This is 3-hydroxy-3-methylglutaryl-coenzyme A reductase from Aspergillus terreus.